The sequence spans 533 residues: Retinoid isomerohydrolase (533 aa).

Residue serine 2 is modified to N-acetylserine. A phosphothreonine mark is found at threonine 101 and threonine 105. Cysteine 112 is lipidated: S-palmitoyl cysteine; in membrane form. Position 113 is an N6-acetyllysine (lysine 113). A Phosphoserine modification is found at serine 117. Position 180 (histidine 180) interacts with Fe cation. Cysteine 231 carries S-palmitoyl cysteine; in membrane form lipidation. Positions 241 and 313 each coordinate Fe cation. Residues cysteine 329 and cysteine 330 are each lipidated (S-palmitoyl cysteine; in membrane form). Histidine 527 contacts Fe cation.

It belongs to the carotenoid oxygenase family. In terms of assembly, interacts with MYO7A; this mediates light-dependent intracellular transport of RPE65. The cofactor is Fe(2+). Post-translationally, palmitoylation by LRAT regulates ligand binding specificity; the palmitoylated form (membrane form) specifically binds all-trans-retinyl-palmitate, while the soluble unpalmitoylated form binds all-trans-retinol (vitamin A). In terms of tissue distribution, retinal pigment epithelium specific.

The protein resides in the cytoplasm. Its subcellular location is the cell membrane. It is found in the microsome membrane. The catalysed reaction is an all-trans-retinyl ester + H2O = 11-cis-retinol + a fatty acid + H(+). The enzyme catalyses lutein = (3R,3'S)-zeaxanthin. It catalyses the reaction all-trans-retinyl hexadecanoate + H2O = 11-cis-retinol + hexadecanoate + H(+). Functionally, critical isomerohydrolase in the retinoid cycle involved in regeneration of 11-cis-retinal, the chromophore of rod and cone opsins. Catalyzes the cleavage and isomerization of all-trans-retinyl fatty acid esters to 11-cis-retinol which is further oxidized by 11-cis retinol dehydrogenase to 11-cis-retinal for use as visual chromophore. Essential for the production of 11-cis retinal for both rod and cone photoreceptors. Also capable of catalyzing the isomerization of lutein to meso-zeaxanthin an eye-specific carotenoid. The soluble form binds vitamin A (all-trans-retinol), making it available for LRAT processing to all-trans-retinyl ester. The membrane form, palmitoylated by LRAT, binds all-trans-retinyl esters, making them available for IMH (isomerohydrolase) processing to all-cis-retinol. The soluble form is regenerated by transferring its palmitoyl groups onto 11-cis-retinol, a reaction catalyzed by LRAT. The polypeptide is Retinoid isomerohydrolase (RPE65) (Chlorocebus aethiops (Green monkey)).